Here is a 707-residue protein sequence, read N- to C-terminus: Polyribonucleotide nucleotidyltransferase (707 aa).

Aspartate 488 and aspartate 494 together coordinate Mg(2+). One can recognise a KH domain in the interval 554–613 (PRLFTMKINQDKIREVIGKGGETIRSITAETGTEINIAEDGTITIAATTQEAGDAAKKRI). In terms of domain architecture, S1 motif spans 623–693 (GKVYEGTVVK…DRGRVRLSIK (71 aa)).

This sequence belongs to the polyribonucleotide nucleotidyltransferase family. Mg(2+) serves as cofactor.

Its subcellular location is the cytoplasm. It carries out the reaction RNA(n+1) + phosphate = RNA(n) + a ribonucleoside 5'-diphosphate. Its function is as follows. Involved in mRNA degradation. Catalyzes the phosphorolysis of single-stranded polyribonucleotides processively in the 3'- to 5'-direction. The polypeptide is Polyribonucleotide nucleotidyltransferase (Neisseria meningitidis serogroup B (strain ATCC BAA-335 / MC58)).